We begin with the raw amino-acid sequence, 510 residues long: MHVFFPLLFRPSPVLFIACAYIYIDIYIHCTRCTVVNITMSTNRVPNLDPDLNLNKEIWDLYSSAQKILPDSNRILNLSWRLHNRTSFHRINRIMQHSNSIMDFSASPFASGVNAAGPGNNDLDDTDTDNQQFFLSDMNLNGSSVFENVFDDDDDDDDVETHSIVHSDLLNDMDSASQRASHNASGFPNFLDTSCSSSFDDHFIFTNNLPFLNNNSINNNHSHNSSHNNNSPSIANNTNANTNTNTSASTNTNSPLLRRNPSPSIVKPGSRRNSSVRKKKPALKKIKSSTSVQSSATPPSNTSSNPDIKCSNCTTSTTPLWRKDPKGLPLCNACGLFLKLHGVTRPLSLKTDIIKKRQRSSTKINNNITPPPSSSLNPGAAGKKKNYTASVAASKRKNSLNIVAPLKSQDIPIPKIASPSIPQYLRSNTRHHLSSSVPIEAETFSSFRPDMNMTMNMNLHNASTSSFNNEAFWKPLDSAIDHHSGDTNPNSNMNTTPNGNLSLDWLNLNL.

A Phosphoserine modification is found at Ser167. Low complexity predominate over residues 220–256; sequence NHSHNSSHNNNSPSIANNTNANTNTNTSASTNTNSPL. Disordered stretches follow at residues 220–311 and 358–383; these read NHSH…IKCS and QRSS…AAGK. A phosphoserine mark is found at Ser262 and Ser270. Residues 274–287 show a composition bias toward basic residues; it reads SSVRKKKPALKKIK. The segment covering 294-306 has biased composition (low complexity); that stretch reads SSATPPSNTSSNP. A GATA-type zinc finger spans residues 310 to 334; that stretch reads CSNCTTSTTPLWRKDPKGLPLCNAC. Thr369 is subject to Phosphothreonine. 2 positions are modified to phosphoserine: Ser399 and Ser418.

It is found in the nucleus. Its function is as follows. Positive regulator of multiple nitrogen catabolic genes. This is Transcriptional regulatory protein GAT1 (GAT1) from Saccharomyces cerevisiae (strain ATCC 204508 / S288c) (Baker's yeast).